A 511-amino-acid chain; its full sequence is Maturase K (511 aa).

This sequence belongs to the intron maturase 2 family. MatK subfamily.

Its subcellular location is the plastid. It localises to the chloroplast. Functionally, usually encoded in the trnK tRNA gene intron. Probably assists in splicing its own and other chloroplast group II introns. In Hordeum secalinum (Meadow barley), this protein is Maturase K.